Here is a 60-residue protein sequence, read N- to C-terminus: Large ribosomal subunit protein bL32 (60 aa).

The disordered stretch occupies residues 1 to 60 (MAVQQNKKSPSKRGMHRSHNALTVPGIAVEPTTGETHMRHHISPNGFYRGRQVLKNKSEA). A compositionally biased stretch (basic residues) spans 9–19 (SPSKRGMHRSH).

This sequence belongs to the bacterial ribosomal protein bL32 family.

In Acidovorax ebreus (strain TPSY) (Diaphorobacter sp. (strain TPSY)), this protein is Large ribosomal subunit protein bL32.